A 234-amino-acid chain; its full sequence is 1-(5-phosphoribosyl)-5-[(5-phosphoribosylamino)methylideneamino] imidazole-4-carboxamide isomerase (234 aa).

The active-site Proton acceptor is the aspartate 9. Aspartate 131 (proton donor) is an active-site residue.

It belongs to the HisA/HisF family.

The protein localises to the cytoplasm. The catalysed reaction is 1-(5-phospho-beta-D-ribosyl)-5-[(5-phospho-beta-D-ribosylamino)methylideneamino]imidazole-4-carboxamide = 5-[(5-phospho-1-deoxy-D-ribulos-1-ylimino)methylamino]-1-(5-phospho-beta-D-ribosyl)imidazole-4-carboxamide. The protein operates within amino-acid biosynthesis; L-histidine biosynthesis; L-histidine from 5-phospho-alpha-D-ribose 1-diphosphate: step 4/9. This is 1-(5-phosphoribosyl)-5-[(5-phosphoribosylamino)methylideneamino] imidazole-4-carboxamide isomerase from Staphylococcus carnosus (strain TM300).